Reading from the N-terminus, the 266-residue chain is Protein PAE0875 (266 aa).

This sequence belongs to the CinA family.

The polypeptide is Protein PAE0875 (Pyrobaculum aerophilum (strain ATCC 51768 / DSM 7523 / JCM 9630 / CIP 104966 / NBRC 100827 / IM2)).